The following is a 792-amino-acid chain: Lon protease (792 aa).

In terms of domain architecture, Lon N-terminal spans 16–211 (DAVVVVPVSN…KVSAFLAQRL (196 aa)). An ATP-binding site is contributed by 361–368 (GPPGVGKT). A Lon proteolytic domain is found at 597–778 (TSVPGVATGL…EDAIEAGLDP (182 aa)). Active-site residues include Ser-684 and Lys-727.

Belongs to the peptidase S16 family. As to quaternary structure, homohexamer. Organized in a ring with a central cavity.

The protein resides in the cytoplasm. It catalyses the reaction Hydrolysis of proteins in presence of ATP.. Functionally, ATP-dependent serine protease that mediates the selective degradation of mutant and abnormal proteins as well as certain short-lived regulatory proteins. Required for cellular homeostasis and for survival from DNA damage and developmental changes induced by stress. Degrades polypeptides processively to yield small peptide fragments that are 5 to 10 amino acids long. Binds to DNA in a double-stranded, site-specific manner. This is Lon protease from Phenylobacterium zucineum (strain HLK1).